We begin with the raw amino-acid sequence, 323 residues long: Viral cathepsin (323 aa).

The N-terminal stretch at Met1 to Ser16 is a signal peptide. Residues Ala17 to Gly112 constitute a propeptide, activation peptide. Cystine bridges form between Cys133-Cys174, Cys167-Cys207, and Cys262-Cys310. Cys136 is an active-site residue. Asn158 is a glycosylation site (N-linked (GlcNAc...) asparagine; by host). Residues His269 and Asn289 contribute to the active site.

It belongs to the peptidase C1 family. Synthesized as an inactive proenzyme and activated by proteolytic removal of the inhibitory propeptide.

It carries out the reaction Endopeptidase of broad specificity, hydrolyzing substrates of both cathepsin L and cathepsin B.. In terms of biological role, cysteine protease that plays an essential role in host liquefaction to facilitate horizontal transmission of the virus. May participate in the degradation of foreign protein expressed by the baculovirus system. The polypeptide is Viral cathepsin (VCATH) (Bombyx mori (Silk moth)).